The primary structure comprises 831 residues: MutS protein homolog 5 (831 aa).

The disordered stretch occupies residues 1-43 (MAFRATPGRTPPGPGPGVPSASFSSPQPAMAAPGGIEEEDEEE). Position 589–596 (589–596 (GPNSSGKS)) interacts with ATP.

The protein belongs to the DNA mismatch repair MutS family. In terms of assembly, heterooligomer of MSH4 and MSH5. Interacts with HJURP. Interacts with C7h12orf40/REDIC1.

Its function is as follows. Involved in DNA mismatch repair and meiotic recombination processes. Facilitates crossovers between homologs during meiosis. In Rattus norvegicus (Rat), this protein is MutS protein homolog 5 (Msh5).